The sequence spans 162 residues: Transcription elongation factor GreA (162 aa).

Positions 50–75 (YHAAREEQGHLESRIRQLQELLRTAK) form a coiled coil.

The protein belongs to the GreA/GreB family.

Functionally, necessary for efficient RNA polymerase transcription elongation past template-encoded arresting sites. The arresting sites in DNA have the property of trapping a certain fraction of elongating RNA polymerases that pass through, resulting in locked ternary complexes. Cleavage of the nascent transcript by cleavage factors such as GreA or GreB allows the resumption of elongation from the new 3'terminus. GreA releases sequences of 2 to 3 nucleotides. This Saccharopolyspora erythraea (strain ATCC 11635 / DSM 40517 / JCM 4748 / NBRC 13426 / NCIMB 8594 / NRRL 2338) protein is Transcription elongation factor GreA.